The primary structure comprises 118 residues: Large ribosomal subunit protein uL24 (118 aa).

This sequence belongs to the universal ribosomal protein uL24 family. Part of the 50S ribosomal subunit.

Its function is as follows. One of two assembly initiator proteins, it binds directly to the 5'-end of the 23S rRNA, where it nucleates assembly of the 50S subunit. One of the proteins that surrounds the polypeptide exit tunnel on the outside of the subunit. This Prochlorococcus marinus (strain MIT 9301) protein is Large ribosomal subunit protein uL24.